The primary structure comprises 354 residues: Selenide, water dikinase (354 aa).

C23 is an active-site residue. Residues K26 and 54-56 (TAD) contribute to the ATP site. Residue D57 participates in Mg(2+) binding. ATP is bound by residues D74, D97, and 145–147 (GHS). A Mg(2+)-binding site is contributed by D97. Residue D233 coordinates Mg(2+).

It belongs to the selenophosphate synthase 1 family. Class I subfamily. As to quaternary structure, homodimer. Requires Mg(2+) as cofactor.

It catalyses the reaction hydrogenselenide + ATP + H2O = selenophosphate + AMP + phosphate + 2 H(+). Its function is as follows. Synthesizes selenophosphate from selenide and ATP. This Paraburkholderia xenovorans (strain LB400) protein is Selenide, water dikinase.